Here is a 211-residue protein sequence, read N- to C-terminus: NADH-quinone oxidoreductase subunit C (211 aa).

This sequence belongs to the complex I 30 kDa subunit family. NDH-1 is composed of 14 different subunits. Subunits NuoB, C, D, E, F, and G constitute the peripheral sector of the complex.

Its subcellular location is the cell inner membrane. The catalysed reaction is a quinone + NADH + 5 H(+)(in) = a quinol + NAD(+) + 4 H(+)(out). Its function is as follows. NDH-1 shuttles electrons from NADH, via FMN and iron-sulfur (Fe-S) centers, to quinones in the respiratory chain. The immediate electron acceptor for the enzyme in this species is believed to be ubiquinone. Couples the redox reaction to proton translocation (for every two electrons transferred, four hydrogen ions are translocated across the cytoplasmic membrane), and thus conserves the redox energy in a proton gradient. This chain is NADH-quinone oxidoreductase subunit C, found in Azorhizobium caulinodans (strain ATCC 43989 / DSM 5975 / JCM 20966 / LMG 6465 / NBRC 14845 / NCIMB 13405 / ORS 571).